We begin with the raw amino-acid sequence, 307 residues long: Ribonuclease Z (307 aa).

Zn(2+) is bound by residues histidine 63, histidine 65, aspartate 67, histidine 68, histidine 141, aspartate 212, and histidine 270. Residue aspartate 67 is the Proton acceptor of the active site.

The protein belongs to the RNase Z family. In terms of assembly, homodimer. Requires Zn(2+) as cofactor.

The catalysed reaction is Endonucleolytic cleavage of RNA, removing extra 3' nucleotides from tRNA precursor, generating 3' termini of tRNAs. A 3'-hydroxy group is left at the tRNA terminus and a 5'-phosphoryl group is left at the trailer molecule.. Zinc phosphodiesterase, which displays some tRNA 3'-processing endonuclease activity. Probably involved in tRNA maturation, by removing a 3'-trailer from precursor tRNA. The protein is Ribonuclease Z of Bacillus cereus (strain B4264).